The chain runs to 339 residues: UPF0324 membrane protein M6_Spy0799 (339 aa).

Helical transmembrane passes span 7–24, 28–50, 57–79, 84–106, 118–140, 150–172, 256–275, 290–307, and 314–336; these read KLPG…AWYL, FPII…FYEH, GISF…GLNL, AVGM…VAYG, ATLV…APVI, AISV…GQLL, FILF…SLGV, FIVM…LVKL, and AILL…QLSL.

This sequence belongs to the UPF0324 family.

It localises to the cell membrane. The protein is UPF0324 membrane protein M6_Spy0799 of Streptococcus pyogenes serotype M6 (strain ATCC BAA-946 / MGAS10394).